The primary structure comprises 1015 residues: Translation initiation factor IF-2 (1015 aa).

Disordered regions lie at residues 124–144, 159–179, 196–230, and 250–386; these read EKEP…EKKV, EVTV…PKPV, KKEE…KEEE, and IDLA…VSEE. Basic and acidic residues-rich tracts occupy residues 196-217 and 265-315; these read KKEE…EKPV and SKEE…DPNG. The region spanning 514 to 684 is the tr-type G domain; sequence HRAPIVTVMG…LLEAEMLDLK (171 aa). The interval 523-530 is G1; it reads GHVDHGKT. GTP is bound at residue 523-530; it reads GHVDHGKT. The G2 stretch occupies residues 548 to 552; it reads GITQH. The segment at 570 to 573 is G3; it reads DTPG. GTP contacts are provided by residues 570–574 and 624–627; these read DTPGH and NKID. The interval 624–627 is G4; it reads NKID. The segment at 660–662 is G5; the sequence is SAK.

Belongs to the TRAFAC class translation factor GTPase superfamily. Classic translation factor GTPase family. IF-2 subfamily.

The protein localises to the cytoplasm. Its function is as follows. One of the essential components for the initiation of protein synthesis. Protects formylmethionyl-tRNA from spontaneous hydrolysis and promotes its binding to the 30S ribosomal subunits. Also involved in the hydrolysis of GTP during the formation of the 70S ribosomal complex. In Bacteroides fragilis (strain ATCC 25285 / DSM 2151 / CCUG 4856 / JCM 11019 / LMG 10263 / NCTC 9343 / Onslow / VPI 2553 / EN-2), this protein is Translation initiation factor IF-2.